A 416-amino-acid polypeptide reads, in one-letter code: Putative serine protease HhoB (416 aa).

An N-terminal signal peptide occupies residues 1 to 25 (MAIHLKASHLGVAVLLLLFGGAIGA). The segment covering 35–53 (GQNHSSPDSPVNTSPQSLT) has biased composition (polar residues). The disordered stretch occupies residues 35–57 (GQNHSSPDSPVNTSPQSLTPAPV). Residues 320–398 (EMTKQLRTSG…PLAIAVKRGQ (79 aa)) enclose the PDZ domain.

It belongs to the peptidase S1C family.

Functionally, a putative protease, its function overlaps that of the related putative proteases HtrA and HhoA. In Synechocystis sp. (strain ATCC 27184 / PCC 6803 / Kazusa), this protein is Putative serine protease HhoB (hhoB).